A 325-amino-acid chain; its full sequence is tRNA(Ile)-lysidine synthase (325 aa).

34 to 39 (SGGADS) is an ATP binding site.

Belongs to the tRNA(Ile)-lysidine synthase family.

The protein resides in the cytoplasm. The catalysed reaction is cytidine(34) in tRNA(Ile2) + L-lysine + ATP = lysidine(34) in tRNA(Ile2) + AMP + diphosphate + H(+). Ligates lysine onto the cytidine present at position 34 of the AUA codon-specific tRNA(Ile) that contains the anticodon CAU, in an ATP-dependent manner. Cytidine is converted to lysidine, thus changing the amino acid specificity of the tRNA from methionine to isoleucine. This is tRNA(Ile)-lysidine synthase from Rhodococcus jostii (strain RHA1).